The following is a 251-amino-acid chain: CDP-diacylglycerol pyrophosphatase (251 aa).

A helical membrane pass occupies residues 4–24 (AGLLFLVMIVIAVVAAGIGYW).

Belongs to the Cdh family.

It is found in the cell inner membrane. The catalysed reaction is a CDP-1,2-diacyl-sn-glycerol + H2O = a 1,2-diacyl-sn-glycero-3-phosphate + CMP + 2 H(+). Its pathway is phospholipid metabolism; CDP-diacylglycerol degradation; phosphatidate from CDP-diacylglycerol: step 1/1. The protein is CDP-diacylglycerol pyrophosphatase of Shigella flexneri.